Consider the following 326-residue polypeptide: tRNA N6-adenosine threonylcarbamoyltransferase (326 aa).

2 residues coordinate Fe cation: histidine 111 and histidine 115. Residues threonine 134–glycine 138, aspartate 167, glycine 180, aspartate 184, and asparagine 268 contribute to the substrate site. Aspartate 293 contacts Fe cation.

The protein belongs to the KAE1 / TsaD family. Fe(2+) is required as a cofactor.

It localises to the cytoplasm. It carries out the reaction L-threonylcarbamoyladenylate + adenosine(37) in tRNA = N(6)-L-threonylcarbamoyladenosine(37) in tRNA + AMP + H(+). In terms of biological role, required for the formation of a threonylcarbamoyl group on adenosine at position 37 (t(6)A37) in tRNAs that read codons beginning with adenine. Is involved in the transfer of the threonylcarbamoyl moiety of threonylcarbamoyl-AMP (TC-AMP) to the N6 group of A37, together with TsaE and TsaB. TsaD likely plays a direct catalytic role in this reaction. In Dehalococcoides mccartyi (strain ATCC BAA-2100 / JCM 16839 / KCTC 5957 / BAV1), this protein is tRNA N6-adenosine threonylcarbamoyltransferase.